The sequence spans 1091 residues: Sodium/potassium exporting P-type ATPase 2 (1091 aa).

Residues 1 to 63 are Cytoplasmic-facing; the sequence is MSEGTVKENN…LGDDTKIDYK (63 aa). Residues 64-84 form a helical membrane-spanning segment; sequence AMVLHQVCNAMIMVLVISMAI. The Extracellular segment spans residues 85-90; the sequence is SFAVRD. A helical membrane pass occupies residues 91–111; that stretch reads WITGGVISFVIAVNVLIGLVQ. The Cytoplasmic portion of the chain corresponds to 112 to 282; it reads EYKATKTMNS…TNVGTPLHRK (171 aa). The chain crosses the membrane as a helical span at residues 283–303; sequence LSKLAVLLFWIAVLFAIIVMA. Over 304 to 312 the chain is Extracellular; sequence SQKFDVDKR. Residues 313-333 form a helical membrane-spanning segment; that stretch reads VAIYAICVALSMIPSSLVVVL. At 334–815 the chain is on the cytoplasmic side; it reads TITMSVGAAV…RRMTDNIQKF (482 aa). The active-site 4-aspartylphosphate intermediate is Asp369. 2 residues coordinate Mg(2+): Asp369 and Thr371. Residues Thr371 and Glu483 each contribute to the ATP site. The disordered stretch occupies residues 499 to 525; sequence ALTGEKSTNQSNENDQSSLSQHNEKPG. A compositionally biased stretch (polar residues) spans 503–519; that stretch reads EKSTNQSNENDQSSLSQ. ATP-binding residues include Lys561, Arg606, Thr673, Gly674, Asp675, Arg732, and Lys738. Asp757 provides a ligand contact to Mg(2+). Asn760 is an ATP binding site. Residues 816-836 traverse the membrane as a helical segment; sequence VLQLLAENVAQALYLIIGLVF. The Extracellular portion of the chain corresponds to 837–848; that stretch reads RDENGKSVFPLS. The chain crosses the membrane as a helical span at residues 849–869; it reads PVEVLWIIVVTSCFPAMGLGL. At 870 to 885 the chain is on the cytoplasmic side; sequence EKAAPDLMDRPPHDSE. Residues 886–906 form a helical membrane-spanning segment; that stretch reads VGIFTWEVIIDTFAYGIIMTG. Topologically, residues 907-943 are extracellular; sequence SCMASFTGSLYGINSGRLGHDCDGTYNSSCRDVYRSR. The chain crosses the membrane as a helical span at residues 944-964; sequence SAAFATMTWCALILAWEVVDM. Topologically, residues 965–991 are cytoplasmic; sequence RRSFFRMHPDTDSPVKEFFRSIWGNQF. A helical transmembrane segment spans residues 992–1012; the sequence is LFWSIIFGFVSAFPVVYIPVI. Residues 1013 to 1021 lie on the Extracellular side of the membrane; the sequence is NDKVFLHKP. The helical transmembrane segment at 1022 to 1042 threads the bilayer; that stretch reads IGAEWGLAIAFTIAFWIGAEL. Over 1043–1091 the chain is Cytoplasmic; the sequence is YKCGKRRYFKTQRAHNPENDLESNNKRDPFEAYSTSTTIHTEVNIGIKQ.

Belongs to the cation transport ATPase (P-type) (TC 3.A.3) family. Type IID subfamily. Mg(2+) serves as cofactor. In terms of processing, the active site is phosphorylated in presence of sodium or potassium and in conditions of higher pH. Not phosphorylated in presence of calcium ions.

The protein resides in the cell membrane. The catalysed reaction is Na(+)(in) + ATP + H2O = Na(+)(out) + ADP + phosphate + H(+). It carries out the reaction K(+)(in) + ATP + H2O = K(+)(out) + ADP + phosphate + H(+). Its function is as follows. Catalyzes the hydrolysis of ATP coupled with the export of sodium and potassium from the cell. May export potassium less efficiently. May transport other cations such as lithium. Sodium/potassium efflux ATPases are involved in salt tolerance and maintaining the membrane potential across the plasma membrane in high salinity (Na+) or alkaline (K+) environments. This is Sodium/potassium exporting P-type ATPase 2 from Saccharomyces cerevisiae (strain ATCC 204508 / S288c) (Baker's yeast).